Reading from the N-terminus, the 1040-residue chain is uncharacterized protein (1040 aa).

The 186-residue stretch at 403-588 (RLEESSKKGG…YSLIKFLRIK (186 aa)) folds into the Helicase ATP-binding domain. 416-423 (DDMGLGKT) is an ATP binding site. An RING-type zinc finger spans residues 746–798 (CSLCMDVVAELLIIVPCGHFLCRECLTHVITSSEDMAKQTSNENISPKCSVCE). One can recognise a Helicase C-terminal domain in the interval 866–1032 (KIEKALNAVK…ISRLNTKELS (167 aa)).

The protein belongs to the SNF2/RAD54 helicase family.

Its subcellular location is the nucleus. This is an uncharacterized protein from Schizosaccharomyces pombe (strain 972 / ATCC 24843) (Fission yeast).